The following is a 110-amino-acid chain: UPF0473 protein SSP1146 (110 aa).

It belongs to the UPF0473 family.

The sequence is that of UPF0473 protein SSP1146 from Staphylococcus saprophyticus subsp. saprophyticus (strain ATCC 15305 / DSM 20229 / NCIMB 8711 / NCTC 7292 / S-41).